A 421-amino-acid chain; its full sequence is Glutamate dehydrogenase (421 aa).

The active site involves Lys105. NAD(+) is bound at residue Gly220–Tyr226.

This sequence belongs to the Glu/Leu/Phe/Val dehydrogenases family. As to quaternary structure, homohexamer.

The protein localises to the cytoplasm. Its subcellular location is the chromosome. The catalysed reaction is L-glutamate + NAD(+) + H2O = 2-oxoglutarate + NH4(+) + NADH + H(+). The enzyme catalyses L-glutamate + NADP(+) + H2O = 2-oxoglutarate + NH4(+) + NADPH + H(+). The protein is Glutamate dehydrogenase (gdhA) of Thermococcus kodakarensis (strain ATCC BAA-918 / JCM 12380 / KOD1) (Pyrococcus kodakaraensis (strain KOD1)).